We begin with the raw amino-acid sequence, 290 residues long: ATP synthase gamma chain (290 aa).

This sequence belongs to the ATPase gamma chain family. As to quaternary structure, F-type ATPases have 2 components, CF(1) - the catalytic core - and CF(0) - the membrane proton channel. CF(1) has five subunits: alpha(3), beta(3), gamma(1), delta(1), epsilon(1). CF(0) has three main subunits: a, b and c.

The protein resides in the cell inner membrane. In terms of biological role, produces ATP from ADP in the presence of a proton gradient across the membrane. The gamma chain is believed to be important in regulating ATPase activity and the flow of protons through the CF(0) complex. In Buchnera aphidicola subsp. Acyrthosiphon pisum (strain APS) (Acyrthosiphon pisum symbiotic bacterium), this protein is ATP synthase gamma chain.